The sequence spans 120 residues: Large ribosomal subunit protein uL18 (120 aa).

The protein belongs to the universal ribosomal protein uL18 family. Part of the 50S ribosomal subunit; part of the 5S rRNA/L5/L18/L25 subcomplex. Contacts the 5S and 23S rRNAs.

In terms of biological role, this is one of the proteins that bind and probably mediate the attachment of the 5S RNA into the large ribosomal subunit, where it forms part of the central protuberance. The chain is Large ribosomal subunit protein uL18 from Bordetella bronchiseptica (strain ATCC BAA-588 / NCTC 13252 / RB50) (Alcaligenes bronchisepticus).